Here is a 296-residue protein sequence, read N- to C-terminus: Bifunctional protein FolD (296 aa).

Residues Gly-169 to Gly-171, Thr-196, and Val-237 each bind NADP(+).

The protein belongs to the tetrahydrofolate dehydrogenase/cyclohydrolase family. Homodimer.

It catalyses the reaction (6R)-5,10-methylene-5,6,7,8-tetrahydrofolate + NADP(+) = (6R)-5,10-methenyltetrahydrofolate + NADPH. The enzyme catalyses (6R)-5,10-methenyltetrahydrofolate + H2O = (6R)-10-formyltetrahydrofolate + H(+). Its pathway is one-carbon metabolism; tetrahydrofolate interconversion. Its function is as follows. Catalyzes the oxidation of 5,10-methylenetetrahydrofolate to 5,10-methenyltetrahydrofolate and then the hydrolysis of 5,10-methenyltetrahydrofolate to 10-formyltetrahydrofolate. This chain is Bifunctional protein FolD, found in Kocuria rhizophila (strain ATCC 9341 / DSM 348 / NBRC 103217 / DC2201).